Consider the following 378-residue polypeptide: Schlafen family member 2 (378 aa).

The protein belongs to the Schlafen family. Mainly expressed in the thymus, lymph node and spleen.

The protein resides in the cytoplasm. In terms of biological role, tRNA-binding protein involved in T-cell mediated immunity. Plays a key role during the metabolic reprograming phase of activated T-cell, when T-cells produce reactive oxygen species (ROS): acts by binding tRNAs and protecting them from cleavage by the oxidative stress-activated ribonuclease angiogenin (ANG). Also required for T-cell quiescence maintenance. This Mus musculus (Mouse) protein is Schlafen family member 2.